Consider the following 276-residue polypeptide: Aldo-keto reductase Mkms_1985 (276 aa).

Y50 serves as the catalytic Proton donor. NADPH-binding residues include L190, I228, K230, S231, V232, R236, S239, and N240. Residues 257–276 (SSLEDGSRLGPDPKTFNFTG) are disordered.

Belongs to the aldo/keto reductase family.

The protein is Aldo-keto reductase Mkms_1985 of Mycobacterium sp. (strain KMS).